The following is a 687-amino-acid chain: Polyphosphate kinase (687 aa).

Asparagine 45 contributes to the ATP binding site. Mg(2+)-binding residues include arginine 375 and arginine 405. Residue histidine 435 is the Phosphohistidine intermediate of the active site. 3 residues coordinate ATP: tyrosine 472, arginine 568, and histidine 596.

Belongs to the polyphosphate kinase 1 (PPK1) family. Mg(2+) serves as cofactor. An intermediate of this reaction is the autophosphorylated ppk in which a phosphate is covalently linked to a histidine residue through a N-P bond.

The catalysed reaction is [phosphate](n) + ATP = [phosphate](n+1) + ADP. Functionally, catalyzes the reversible transfer of the terminal phosphate of ATP to form a long-chain polyphosphate (polyP). The chain is Polyphosphate kinase from Burkholderia lata (strain ATCC 17760 / DSM 23089 / LMG 22485 / NCIMB 9086 / R18194 / 383).